The sequence spans 510 residues: NAD(P)H-quinone oxidoreductase subunit 2 B, chloroplastic (510 aa).

Helical transmembrane passes span leucine 26–leucine 46, isoleucine 57–phenylalanine 77, isoleucine 99–isoleucine 119, methionine 124–cysteine 144, leucine 149–tyrosine 169, tyrosine 183–glycine 203, proline 227–alanine 247, tryptophan 295–isoleucine 315, methionine 323–glycine 342, tyrosine 354–leucine 374, alanine 395–phenylalanine 415, leucine 418–phenylalanine 438, and methionine 484–isoleucine 504.

This sequence belongs to the complex I subunit 2 family. NDH is composed of at least 16 different subunits, 5 of which are encoded in the nucleus.

The protein resides in the plastid. It is found in the chloroplast thylakoid membrane. It carries out the reaction a plastoquinone + NADH + (n+1) H(+)(in) = a plastoquinol + NAD(+) + n H(+)(out). The enzyme catalyses a plastoquinone + NADPH + (n+1) H(+)(in) = a plastoquinol + NADP(+) + n H(+)(out). NDH shuttles electrons from NAD(P)H:plastoquinone, via FMN and iron-sulfur (Fe-S) centers, to quinones in the photosynthetic chain and possibly in a chloroplast respiratory chain. The immediate electron acceptor for the enzyme in this species is believed to be plastoquinone. Couples the redox reaction to proton translocation, and thus conserves the redox energy in a proton gradient. The polypeptide is NAD(P)H-quinone oxidoreductase subunit 2 B, chloroplastic (Oenothera argillicola (Appalachian evening primrose)).